Consider the following 613-residue polypeptide: Dihydroxy-acid dehydratase (613 aa).

Aspartate 81 serves as a coordination point for Mg(2+). Cysteine 122 is a binding site for [2Fe-2S] cluster. Positions 123 and 124 each coordinate Mg(2+). Lysine 124 carries the post-translational modification N6-carboxylysine. Cysteine 195 is a [2Fe-2S] cluster binding site. A Mg(2+)-binding site is contributed by glutamate 491. Catalysis depends on serine 517, which acts as the Proton acceptor.

This sequence belongs to the IlvD/Edd family. In terms of assembly, homodimer. [2Fe-2S] cluster is required as a cofactor. The cofactor is Mg(2+).

It catalyses the reaction (2R)-2,3-dihydroxy-3-methylbutanoate = 3-methyl-2-oxobutanoate + H2O. The catalysed reaction is (2R,3R)-2,3-dihydroxy-3-methylpentanoate = (S)-3-methyl-2-oxopentanoate + H2O. It participates in amino-acid biosynthesis; L-isoleucine biosynthesis; L-isoleucine from 2-oxobutanoate: step 3/4. Its pathway is amino-acid biosynthesis; L-valine biosynthesis; L-valine from pyruvate: step 3/4. In terms of biological role, functions in the biosynthesis of branched-chain amino acids. Catalyzes the dehydration of (2R,3R)-2,3-dihydroxy-3-methylpentanoate (2,3-dihydroxy-3-methylvalerate) into 2-oxo-3-methylpentanoate (2-oxo-3-methylvalerate) and of (2R)-2,3-dihydroxy-3-methylbutanoate (2,3-dihydroxyisovalerate) into 2-oxo-3-methylbutanoate (2-oxoisovalerate), the penultimate precursor to L-isoleucine and L-valine, respectively. The polypeptide is Dihydroxy-acid dehydratase (Hyphomonas neptunium (strain ATCC 15444)).